The chain runs to 387 residues: Na(+)/H(+) antiporter NhaA (387 aa).

The next 12 helical transmembrane spans lie at 16–36 (AGGVVLIIATIVSLLVANSSI), 53–73 (IEHYVNDGLMTIFFLLIGLEL), 89–109 (LLPIIAALGGMIVPACIHMFF), 118–138 (GSGIPMATDIAFAVGILSLLG), 147–167 (VFLTALAVIDDLGAIFTIAIF), 171–191 (GIDVMYLAGAAGIWAVLFILN), 197–217 (ILWPYLLGGIVMWYFMLHSGV), 220–240 (TITGVILAFVIPFGKGDPDSI), 251–271 (PVAFIILPIFALANTCIIIDS), 283–303 (IGIFLGLVVGKPLGITLFCAI), 321–341 (VIGVACLGGIGFTMSIFITLL), and 354–374 (IAIMLSSVTAALIGLLWLKMT).

The protein belongs to the NhaA Na(+)/H(+) (TC 2.A.33) antiporter family.

It is found in the cell inner membrane. The catalysed reaction is Na(+)(in) + 2 H(+)(out) = Na(+)(out) + 2 H(+)(in). Functionally, na(+)/H(+) antiporter that extrudes sodium in exchange for external protons. The polypeptide is Na(+)/H(+) antiporter NhaA (Cytophaga hutchinsonii (strain ATCC 33406 / DSM 1761 / CIP 103989 / NBRC 15051 / NCIMB 9469 / D465)).